Consider the following 1101-residue polypeptide: ATP-dependent DNA helicase mph1 (1101 aa).

4 disordered regions span residues 22 to 59 (PGTS…SPDR), 95 to 138 (LTQP…QYHD), 154 to 231 (FEEE…TNRP), and 250 to 270 (SSQR…PTHH). Residues 24–48 (TSDTVESVQTNNRPAKQSDISISQG) are compositionally biased toward polar residues. The segment covering 170-190 (TPARTAAAPCAAPKGTAADVP) has biased composition (low complexity). The span at 191-202 (FDLDDIPDDAFD) shows a compositional bias: acidic residues. The segment covering 209–228 (PPRSTSQATRGPPVQSQFRT) has biased composition (polar residues). One can recognise a Helicase ATP-binding domain in the interval 296–464 (IAQRGLFHNL…AIIDDLGIAK (169 aa)). Residue 309-316 (LPTGLGKT) coordinates ATP. The short motif at 412–415 (DEAH) is the DEAH box element. The Helicase C-terminal domain occupies 634-808 (YLKQVVLNHF…GTRFTFHDDK (175 aa)). Disordered regions lie at residues 824–890 (RQID…PTPE) and 991–1067 (SRDP…QDAF). The span at 842–854 (RRARPPKRPPKKF) shows a compositional bias: basic residues.

Belongs to the DEAD box helicase family. DEAH subfamily. FANCM sub-subfamily. Interacts with the MHF histone-fold complex to form the FANCM-MHF complex.

The protein localises to the nucleus. It carries out the reaction ATP + H2O = ADP + phosphate + H(+). Functionally, ATP-dependent DNA helicase involved in DNA damage repair by homologous recombination and in genome maintenance. Capable of unwinding D-loops. Plays a role in limiting crossover recombinants during mitotic DNA double-strand break (DSB) repair. Component of a FANCM-MHF complex which promotes gene conversion at blocked replication forks, probably by reversal of the stalled fork. This Aspergillus fumigatus (strain CBS 144.89 / FGSC A1163 / CEA10) (Neosartorya fumigata) protein is ATP-dependent DNA helicase mph1.